We begin with the raw amino-acid sequence, 568 residues long: Cytochrome P450 monooxygenase 41 (568 aa).

Residues 21-41 form a helical membrane-spanning segment; sequence LTSLVPLILSVMVCLIATVTI. N-linked (GlcNAc...) asparagine glycans are attached at residues asparagine 321 and asparagine 377. Residue cysteine 514 coordinates heme.

Belongs to the cytochrome P450 family. Heme serves as cofactor.

Its subcellular location is the membrane. It participates in secondary metabolite biosynthesis. In terms of biological role, cytochrome P450 monooxygenase that is able to use 3,5-dimethoxy-trans-stilbene and 3,5,4'-trimethoxy-trans-stilbene as substrates for oxidation. This is Cytochrome P450 monooxygenase 41 from Postia placenta (strain ATCC 44394 / Madison 698-R) (Brown rot fungus).